A 235-amino-acid chain; its full sequence is Carbonic anhydrase 1 (235 aa).

Residues 1–235 (GNKQSPVDIK…LKGRTVKASF (235 aa)) form the Alpha-carbonic anhydrase domain. Residue histidine 40 is the Proton donor/acceptor of the active site. The Zn(2+) site is built by histidine 69, histidine 71, and histidine 94. Residues threonine 174 and 174 to 175 (TH) each bind substrate.

It belongs to the alpha-carbonic anhydrase family. It depends on Zn(2+) as a cofactor.

It localises to the cytoplasm. The catalysed reaction is hydrogencarbonate + H(+) = CO2 + H2O. The enzyme catalyses urea = cyanamide + H2O. With respect to regulation, inhibited by acetazolamide. Catalyzes the reversible hydration of carbon dioxide. Can hydrate cyanamide to urea. This chain is Carbonic anhydrase 1 (CA1), found in Oryctolagus cuniculus (Rabbit).